A 128-amino-acid chain; its full sequence is Sulfurtransferase TusD (128 aa).

Cys78 (cysteine persulfide intermediate) is an active-site residue.

This sequence belongs to the DsrE/TusD family. Heterohexamer, formed by a dimer of trimers. The hexameric TusBCD complex contains 2 copies each of TusB, TusC and TusD. The TusBCD complex interacts with TusE.

It is found in the cytoplasm. Functionally, part of a sulfur-relay system required for 2-thiolation of 5-methylaminomethyl-2-thiouridine (mnm(5)s(2)U) at tRNA wobble positions. Accepts sulfur from TusA and transfers it in turn to TusE. The chain is Sulfurtransferase TusD from Salmonella typhi.